The sequence spans 278 residues: Ras-related protein Rab-40A-like (278 aa).

Residues Gly26, Lys27, and Ser28 each coordinate GTP. Position 28 (Ser28) interacts with Mg(2+). Positions 41–49 are switch-I; that stretch reads SPYSHLGGI. Asp69 lines the Mg(2+) pocket. Gly72, Asn126, and Arg127 together coordinate GTP. Residues 72–88 form a switch-II region; sequence GQGRFCTIFRSYSRGAQ. Residues 175 to 228 enclose the SOCS box domain; it reads LLRHRLNWLGRPSKVLSLQDLCCRTIVSCTPVHLVDKLPLPIALRSHLKSFSMA. The S-palmitoyl cysteine moiety is linked to residue Cys270. The S-geranylgeranyl cysteine moiety is linked to residue Cys275.

The protein belongs to the small GTPase superfamily. Rab family. Mg(2+) serves as cofactor. In terms of tissue distribution, expressed in brain, lung, heart, skeletal muscle, kidney and liver. Highest expression in brain. Expressed in fetal brain and kidney.

It localises to the membrane. Its subcellular location is the cytoplasm. It is found in the mitochondrion. The catalysed reaction is GTP + H2O = GDP + phosphate + H(+). It participates in protein modification; protein ubiquitination. With respect to regulation, regulated by guanine nucleotide exchange factors (GEFs) which promote the exchange of bound GDP for free GTP. Regulated by GTPase activating proteins (GAPs) which increase the GTP hydrolysis activity. Inhibited by GDP dissociation inhibitors (GDIs). Its function is as follows. May act as substrate-recognition component of the ECS(RAB40) E3 ubiquitin ligase complex which mediates the ubiquitination and subsequent proteasomal degradation of target proteins. The Rab40 subfamily belongs to the Rab family that are key regulators of intracellular membrane trafficking, from the formation of transport vesicles to their fusion with membranes. Rabs cycle between an inactive GDP-bound form and an active GTP-bound form that is able to recruit to membranes different sets of downstream effectors directly responsible for vesicle formation, movement, tethering and fusion. This chain is Ras-related protein Rab-40A-like, found in Homo sapiens (Human).